The primary structure comprises 161 residues: Troponin C, slow skeletal and cardiac muscles (161 aa).

At Met1 the chain carries N-acetylmethionine. EF-hand domains lie at 16-51 (QKNE…LGQN), 52-87 (PTPE…CMKD), 92-127 (KTEE…TGET), and 128-161 (ITED…KGVE). Asp65, Asp67, Ser69, Thr71, Asp105, Asn107, Asp109, Tyr111, Glu116, Asn143, Asp145, Arg147, and Glu152 together coordinate Ca(2+).

Belongs to the troponin C family.

Troponin is the central regulatory protein of striated muscle contraction. Tn consists of three components: Tn-I which is the inhibitor of actomyosin ATPase, Tn-T which contains the binding site for tropomyosin and Tn-C. The binding of calcium to Tn-C abolishes the inhibitory action of Tn on actin filaments. The protein is Troponin C, slow skeletal and cardiac muscles (TNNC1) of Coturnix japonica (Japanese quail).